Reading from the N-terminus, the 349-residue chain is 4-hydroxythreonine-4-phosphate dehydrogenase (349 aa).

The substrate site is built by His-141 and Thr-142. A divalent metal cation is bound by residues His-176, His-221, and His-276. Positions 284, 293, and 302 each coordinate substrate.

The protein belongs to the PdxA family. As to quaternary structure, homodimer. The cofactor is Zn(2+). Requires Mg(2+) as cofactor. Co(2+) serves as cofactor.

The protein localises to the cytoplasm. It catalyses the reaction 4-(phosphooxy)-L-threonine + NAD(+) = 3-amino-2-oxopropyl phosphate + CO2 + NADH. It functions in the pathway cofactor biosynthesis; pyridoxine 5'-phosphate biosynthesis; pyridoxine 5'-phosphate from D-erythrose 4-phosphate: step 4/5. Functionally, catalyzes the NAD(P)-dependent oxidation of 4-(phosphooxy)-L-threonine (HTP) into 2-amino-3-oxo-4-(phosphooxy)butyric acid which spontaneously decarboxylates to form 3-amino-2-oxopropyl phosphate (AHAP). The chain is 4-hydroxythreonine-4-phosphate dehydrogenase from Methylorubrum populi (strain ATCC BAA-705 / NCIMB 13946 / BJ001) (Methylobacterium populi).